Reading from the N-terminus, the 657-residue chain is Wall-associated receptor kinase-like 20 (657 aa).

The first 23 residues, 1 to 23 (MEKKRSYYALLIPTLLTVWLACA), serve as a signal peptide directing secretion. The Extracellular segment spans residues 24–293 (GHSCARHAKA…KHCKKKKKTV (270 aa)). An N-linked (GlcNAc...) asparagine glycan is attached at N140. Residues 294–314 (VFAGAAVAVVGVTLAIAVAVI) form a helical membrane-spanning segment. The Cytoplasmic segment spans residues 315-657 (GTKHSHQKVK…NILSQEVTET (343 aa)). Residues 363 to 646 (FSKDNLIGTG…KEVADEIEYI (284 aa)) enclose the Protein kinase domain. ATP contacts are provided by residues 369 to 377 (IGTGGFGEV) and K391. Catalysis depends on D490, which acts as the Proton acceptor.

It belongs to the protein kinase superfamily. Ser/Thr protein kinase family.

It is found in the membrane. It carries out the reaction L-seryl-[protein] + ATP = O-phospho-L-seryl-[protein] + ADP + H(+). The enzyme catalyses L-threonyl-[protein] + ATP = O-phospho-L-threonyl-[protein] + ADP + H(+). Its function is as follows. Serine/threonine-protein kinase that may function as a signaling receptor of extracellular matrix component. The polypeptide is Wall-associated receptor kinase-like 20 (WAKL20) (Arabidopsis thaliana (Mouse-ear cress)).